A 473-amino-acid polypeptide reads, in one-letter code: Cysteine--tRNA ligase (473 aa).

Cysteine 28 is a binding site for Zn(2+). The 'HIGH' region signature appears at 30 to 40; sequence PTVYNMPHIGN. Cysteine 213, histidine 238, and glutamate 242 together coordinate Zn(2+). The 'KMSKS' region motif lies at 270–274; it reads KMSKS. ATP is bound at residue lysine 273.

Belongs to the class-I aminoacyl-tRNA synthetase family. Requires Zn(2+) as cofactor.

It localises to the cytoplasm. It carries out the reaction tRNA(Cys) + L-cysteine + ATP = L-cysteinyl-tRNA(Cys) + AMP + diphosphate. This Methanosarcina acetivorans (strain ATCC 35395 / DSM 2834 / JCM 12185 / C2A) protein is Cysteine--tRNA ligase.